A 335-amino-acid chain; its full sequence is Phosphatidylcholine-sterol acyltransferase (335 aa).

An N-terminal signal peptide occupies residues 1 to 18; sequence MKKWFVCLLGLVALTVQA. Serine 34 acts as the Nucleophile in catalysis. Residues aspartate 306 and histidine 309 contribute to the active site.

It belongs to the 'GDSL' lipolytic enzyme family.

The catalysed reaction is a sterol + a 1,2-diacyl-sn-glycero-3-phosphocholine = a sterol ester + a 1-acyl-sn-glycero-3-phosphocholine. Functionally, fatty acid transfer between phosphatidylcholine and cholesterol. This Aeromonas hydrophila protein is Phosphatidylcholine-sterol acyltransferase.